The sequence spans 181 residues: Translation initiation factor IF-3 (181 aa).

Belongs to the IF-3 family. In terms of assembly, monomer.

The protein resides in the cytoplasm. Functionally, IF-3 binds to the 30S ribosomal subunit and shifts the equilibrium between 70S ribosomes and their 50S and 30S subunits in favor of the free subunits, thus enhancing the availability of 30S subunits on which protein synthesis initiation begins. This is Translation initiation factor IF-3 from Mycoplasma mycoides subsp. mycoides SC (strain CCUG 32753 / NCTC 10114 / PG1).